A 72-amino-acid polypeptide reads, in one-letter code: MGSTTDKIKGNANEAIGKAKQGIGEATGSDRLKGEGVVQEVKGKGQQAMGDAKDAAKEAIDRAAAAARRAAE.

A disordered region spans residues 1–55; the sequence is MGSTTDKIKGNANEAIGKAKQGIGEATGSDRLKGEGVVQEVKGKGQQAMGDAKDA. A compositionally biased stretch (low complexity) spans 35–47; sequence EGVVQEVKGKGQQ.

It belongs to the UPF0337 (CsbD) family.

The sequence is that of UPF0337 protein bsl2407 from Bradyrhizobium diazoefficiens (strain JCM 10833 / BCRC 13528 / IAM 13628 / NBRC 14792 / USDA 110).